A 158-amino-acid chain; its full sequence is uncharacterized protein (158 aa).

A run of 2 helical transmembrane segments spans residues 66–86 (LLII…PWIM) and 94–114 (FFSL…SLTI).

Its subcellular location is the membrane. This is an uncharacterized protein from Saccharomyces cerevisiae (strain ATCC 204508 / S288c) (Baker's yeast).